The chain runs to 279 residues: Putative pyruvate, phosphate dikinase regulatory protein (279 aa).

152-159 (GVSRTSKS) contacts ADP.

Belongs to the pyruvate, phosphate/water dikinase regulatory protein family. PDRP subfamily.

It catalyses the reaction N(tele)-phospho-L-histidyl/L-threonyl-[pyruvate, phosphate dikinase] + ADP = N(tele)-phospho-L-histidyl/O-phospho-L-threonyl-[pyruvate, phosphate dikinase] + AMP + H(+). It carries out the reaction N(tele)-phospho-L-histidyl/O-phospho-L-threonyl-[pyruvate, phosphate dikinase] + phosphate + H(+) = N(tele)-phospho-L-histidyl/L-threonyl-[pyruvate, phosphate dikinase] + diphosphate. Bifunctional serine/threonine kinase and phosphorylase involved in the regulation of the pyruvate, phosphate dikinase (PPDK) by catalyzing its phosphorylation/dephosphorylation. This Anaplasma marginale (strain St. Maries) protein is Putative pyruvate, phosphate dikinase regulatory protein.